The following is a 216-amino-acid chain: MSNLHKFKAYFGMVPLDDYEDEYVEEPDQARRAPRRSHDGYAERDDREFVEPAFSKASYAPSRRDEEDAEFDRYDSRPRVDTVPSRSSRPAMAPRPASRGNLAVDARAERPEARRAPVVDDGGPLAKITTLRPQSYAEARTIGERFRDGTPVIMDLVDMSNADAKRLVDFAAGLAFALRGSFDKVATKVFLLSPADIDVSAEERRRIAETGFYSQK.

The tract at residues 22–126 (EYVEEPDQAR…PVVDDGGPLA (105 aa)) is disordered. 3 stretches are compositionally biased toward basic and acidic residues: residues 28–50 (DQAR…REFV), 62–80 (SRRD…RPRV), and 106–118 (ARAE…RAPV).

Belongs to the SepF family. As to quaternary structure, homodimer. Interacts with FtsZ.

Its subcellular location is the cytoplasm. Functionally, cell division protein that is part of the divisome complex and is recruited early to the Z-ring. Probably stimulates Z-ring formation, perhaps through the cross-linking of FtsZ protofilaments. Its function overlaps with FtsA. This chain is Cell division protein SepF, found in Rhodococcus erythropolis (strain PR4 / NBRC 100887).